The sequence spans 1077 residues: ATP-dependent helicase HRQ1 (1077 aa).

In terms of domain architecture, Helicase ATP-binding spans 299–483 (INSLHQGENV…DMFGINEVTL (185 aa)). 312 to 319 (TSTSSGKS) is an ATP binding site. The DEAH box signature appears at 423–426 (DELH). The 158-residue stretch at 521–678 (ILVQLILNNV…DLVLDFNNIL (158 aa)) folds into the Helicase C-terminal domain.

The protein belongs to the helicase family. HRQ1 subfamily. In terms of assembly, forms heptamer rings. Interacts with RAD4. Mg(2+) serves as cofactor.

It localises to the nucleus. The enzyme catalyses Couples ATP hydrolysis with the unwinding of duplex DNA by translocating in the 3'-5' direction.. It catalyses the reaction ATP + H2O = ADP + phosphate + H(+). In terms of biological role, helicase with 3'-5' helicase activity involved in genome stability. Functions in the RAD4-dependent nucleotide excision repair (NER) pathway and plays a critical role in DNA interstrand cross-link repair. Unwinds relatively long duplex DNA up to 120-bp and requires a long 3'-tail of at least 70 nucleotides for efficient unwinding of duplex DNA. Activity is significantly stimulated by a preexisting fork structure. Shows both processive helicase and DNA strand annealing activities. Affects telomere length by a non-catalytic mechanism, probably through inhibiting telomerase by competing with it for ssDNA binding. The polypeptide is ATP-dependent helicase HRQ1 (Saccharomyces cerevisiae (strain ATCC 204508 / S288c) (Baker's yeast)).